A 156-amino-acid chain; its full sequence is Small ribosomal subunit protein uS7 (156 aa).

This sequence belongs to the universal ribosomal protein uS7 family. In terms of assembly, part of the 30S ribosomal subunit. Contacts proteins S9 and S11.

Its function is as follows. One of the primary rRNA binding proteins, it binds directly to 16S rRNA where it nucleates assembly of the head domain of the 30S subunit. Is located at the subunit interface close to the decoding center, probably blocks exit of the E-site tRNA. In Hyphomonas neptunium (strain ATCC 15444), this protein is Small ribosomal subunit protein uS7.